Reading from the N-terminus, the 384-residue chain is Dual specificity protein phosphatase 9 (384 aa).

The residue at position 16 (serine 16) is a Phosphoserine. The Rhodanese domain occupies 18–139 (PRPRLLLLDC…FQAECPHLCE (122 aa)). A Tyrosine-protein phosphatase domain is found at 203–346 (FPVQILPNLY…LLDFERSLRL (144 aa)). Serine 262 carries the post-translational modification Phosphoserine. The active-site Phosphocysteine intermediate is the cysteine 290. A disordered region spans residues 348–384 (ERHSQEQGSGGQASAASNPPSFFTTPTSDGAFELAPT). Phosphoserine is present on serine 351. Over residues 359–375 (QASAASNPPSFFTTPTS) the composition is skewed to polar residues.

It belongs to the protein-tyrosine phosphatase family. Non-receptor class dual specificity subfamily.

It is found in the cytoplasm. The catalysed reaction is O-phospho-L-tyrosyl-[protein] + H2O = L-tyrosyl-[protein] + phosphate. It catalyses the reaction O-phospho-L-seryl-[protein] + H2O = L-seryl-[protein] + phosphate. It carries out the reaction O-phospho-L-threonyl-[protein] + H2O = L-threonyl-[protein] + phosphate. Its function is as follows. Inactivates MAP kinases. Has a specificity for the ERK family. The protein is Dual specificity protein phosphatase 9 (DUSP9) of Homo sapiens (Human).